The following is a 555-amino-acid chain: Probable apyrase 6 (555 aa).

Over residues 1-10 (MRRSHARSRV) the composition is skewed to basic residues. The interval 1-45 (MRRSHARSRVKNSSSSKSDMDPIKFQIRSGNRAPSSSSTYTLTKP) is disordered. The Cytoplasmic segment spans residues 1–55 (MRRSHARSRVKNSSSSKSDMDPIKFQIRSGNRAPSSSSTYTLTKPNSKHAKSNLL). A compositionally biased stretch (polar residues) spans 28–45 (RSGNRAPSSSSTYTLTKP). A helical transmembrane segment spans residues 56–76 (LTVGSISVVLGVLFLCYSILF). Residues 77 to 512 (SGGNLRGSLR…HALFSNHPKT (436 aa)) are Extracellular-facing. 89-99 (VVIDGGSTGTR) is an ATP binding site. Catalysis depends on E212, which acts as the Proton acceptor. Residue 236–246 (GIVELGGASAQ) coordinates ATP. N-linked (GlcNAc...) asparagine glycosylation is found at N267 and N348. A helical membrane pass occupies residues 513-533 (LHYLIGIPILMTVLVYLVTKW). The Cytoplasmic portion of the chain corresponds to 534-555 (RKPQLKTIYDLEKGRYIVTRIR).

Belongs to the GDA1/CD39 NTPase family. Ca(2+) is required as a cofactor. As to expression, detected in mature pollen grains (at the protein level). Also expressed in the veins and hydathode regions of rosette leaves.

The protein resides in the cytoplasmic vesicle membrane. The enzyme catalyses a ribonucleoside 5'-triphosphate + 2 H2O = a ribonucleoside 5'-phosphate + 2 phosphate + 2 H(+). Its function is as follows. Catalyzes the hydrolysis of phosphoanhydride bonds of nucleoside tri- and di-phosphates. Involved in the regulation of pollen and anther development. The protein is Probable apyrase 6 (APY6) of Arabidopsis thaliana (Mouse-ear cress).